Reading from the N-terminus, the 205-residue chain is Recombination protein RecR (205 aa).

The C4-type zinc-finger motif lies at 59-74 (CARCNTFCEGGLCDIC). Positions 82–177 (RRLMVVHMPA…KVSRLSQGIP (96 aa)) constitute a Toprim domain.

This sequence belongs to the RecR family.

Functionally, may play a role in DNA repair. It seems to be involved in an RecBC-independent recombinational process of DNA repair. It may act with RecF and RecO. In Neisseria gonorrhoeae (strain ATCC 700825 / FA 1090), this protein is Recombination protein RecR.